The primary structure comprises 1072 residues: MERERSNFFFLFLFCSWVSMAQPTLSLSSDGQALLSLKRPSPSLFSSWDPQDQTPCSWYGITCSADNRVISVSIPDTFLNLSSIPDLSSLSSLQFLNLSSTNLSGPIPPSFGKLTHLRLLDLSSNSLSGPIPSELGRLSTLQFLILNANKLSGSIPSQISNLFALQVLCLQDNLLNGSIPSSFGSLVSLQQFRLGGNTNLGGPIPAQLGFLKNLTTLGFAASGLSGSIPSTFGNLVNLQTLALYDTEISGTIPPQLGLCSELRNLYLHMNKLTGSIPKELGKLQKITSLLLWGNSLSGVIPPEISNCSSLVVFDVSANDLTGDIPGDLGKLVWLEQLQLSDNMFTGQIPWELSNCSSLIALQLDKNKLSGSIPSQIGNLKSLQSFFLWENSISGTIPSSFGNCTDLVALDLSRNKLTGRIPEELFSLKRLSKLLLLGNSLSGGLPKSVAKCQSLVRLRVGENQLSGQIPKEIGELQNLVFLDLYMNHFSGGLPYEISNITVLELLDVHNNYITGDIPAQLGNLVNLEQLDLSRNSFTGNIPLSFGNLSYLNKLILNNNLLTGQIPKSIKNLQKLTLLDLSYNSLSGEIPQELGQVTSLTINLDLSYNTFTGNIPETFSDLTQLQSLDLSSNSLHGDIKVLGSLTSLASLNISCNNFSGPIPSTPFFKTISTTSYLQNTNLCHSLDGITCSSHTGQNNGVKSPKIVALTAVILASITIAILAAWLLILRNNHLYKTSQNSSSSPSTAEDFSYPWTFIPFQKLGITVNNIVTSLTDENVIGKGCSGIVYKAEIPNGDIVAVKKLWKTKDNNEEGESTIDSFAAEIQILGNIRHRNIVKLLGYCSNKSVKLLLYNYFPNGNLQQLLQGNRNLDWETRYKIAIGAAQGLAYLHHDCVPAILHRDVKCNNILLDSKYEAILADFGLAKLMMNSPNYHNAMSRVAGSYGYIAPEYGYTMNITEKSDVYSYGVVLLEILSGRSAVEPQIGDGLHIVEWVKKKMGTFEPALSVLDVKLQGLPDQIVQEMLQTLGIAMFCVNPSPVERPTMKEVVTLLMEVKCSPEEWGKTSQPLIKPSSS.

A signal peptide spans 1 to 21 (MERERSNFFFLFLFCSWVSMA). At 22–706 (QPTLSLSSDG…NGVKSPKIVA (685 aa)) the chain is on the extracellular side. A disulfide bridge connects residues C56 and C63. LRR repeat units lie at residues 66–89 (DNRV…DLSS), 90–113 (LSSL…SFGK), 114–138 (LTHL…LGRL), 140–162 (TLQF…ISNL), 164–185 (ALQV…SFGS), 187–211 (VSLQ…LGFL), 212–234 (KNLT…TFGN), 235–259 (LVNL…LGLC), 260–283 (SELR…LGKL), 285–307 (KITS…ISNC), 308–331 (SSLV…LGKL), 332–355 (VWLE…LSNC), 356–379 (SSLI…IGNL), 381–402 (SLQS…SFGN), 403–427 (CTDL…LFSL), 429–451 (RLSK…VAKC), 452–475 (QSLV…IGEL), 477–499 (NLVF…ISNI), 500–523 (TVLE…LGNL), 524–546 (VNLE…SFGN), 548–571 (SYLN…IKNL), 572–595 (QKLT…LGQV), 597–619 (SLTI…TFSD), 620–642 (LTQL…VLGS), and 643–667 (LTSL…PFFK). Residues N80, N97, and N102 are each glycosylated (N-linked (GlcNAc...) asparagine). A Small peptide recognition motif is present at residues 171-172 (QD). N176 carries an N-linked (GlcNAc...) asparagine glycan. The Small peptide recognition motif lies at 193 to 196 (RLGG). N213 carries an N-linked (GlcNAc...) asparagine glycan. Short sequence motifs (small peptide recognition) lie at residues 216-221 (TLGFAA), Y244, and 266-268 (YLH). Residue N306 is glycosylated (N-linked (GlcNAc...) asparagine). 2 consecutive short sequence motifs (small peptide recognition) follow at residues 314–317 (DVSA) and 336–338 (QLQ). N354 is a glycosylation site (N-linked (GlcNAc...) asparagine). Residues 384 to 388 (SFFLW) carry the Small peptide recognition motif. Residue N402 is glycosylated (N-linked (GlcNAc...) asparagine). 3 consecutive short sequence motifs (small peptide recognition) follow at residues 410–413 (DLSR), 432–436 (KLLLL), and 456–458 (RLR). N498 is a glycosylation site (N-linked (GlcNAc...) asparagine). N-linked (GlcNAc...) asparagine glycosylation is present at N546. N-linked (GlcNAc...) asparagine glycans are attached at residues N650 and N655. A helical membrane pass occupies residues 707 to 727 (LTAVILASITIAILAAWLLIL). Residues 728 to 1072 (RNNHLYKTSQ…SQPLIKPSSS (345 aa)) lie on the Cytoplasmic side of the membrane. At T764 the chain carries Phosphothreonine. The Protein kinase domain occupies 772 to 1067 (LTDENVIGKG…EWGKTSQPLI (296 aa)). Residues 778–786 (IGKGCSGIV) and K800 contribute to the ATP site. Y851 and Y887 each carry phosphotyrosine. D900 serves as the catalytic Proton acceptor. S936 is modified (phosphoserine). 2 positions are modified to phosphotyrosine: Y944 and Y951. T952 carries the phosphothreonine modification.

It belongs to the protein kinase superfamily. Ser/Thr protein kinase family. In terms of assembly, binds to RGF1; this interaction triggers the formation of heterodimers with SERK1. In terms of processing, phosphorylated and ubiquitinated upon interaction with RGF1, thus leading to activation a subsequent degradation. Autophosphorylated. Expressed in roots and hypocotyls.

It localises to the membrane. It carries out the reaction L-seryl-[protein] + ATP = O-phospho-L-seryl-[protein] + ADP + H(+). The enzyme catalyses L-threonyl-[protein] + ATP = O-phospho-L-threonyl-[protein] + ADP + H(+). Together with RGI1, RGI2, RGI3 and RGI4, acts as a receptor of RGF1, a peptide hormone that maintains the postembryonic root stem cell niche by regulating the expression levels and patterns of the transcription factor PLETHORA (PLT). Links RGF1 signal with its downstream components. The protein is LRR receptor-like serine/threonine-protein kinase RGI5 of Arabidopsis thaliana (Mouse-ear cress).